We begin with the raw amino-acid sequence, 146 residues long: Angiogenin (146 aa).

Residues 1–24 (MVMGLHLLLLVFILGLGLTPPTLA) form the signal peptide. Gln25 is subject to Pyrrolidone carboxylic acid. The active-site Proton acceptor is His37. 3 disulfide bridges follow: Cys50/Cys105, Cys63/Cys116, and Cys81/Cys131. A Nucleolar localization signal motif is present at residues 55–59 (RLRNM). Cys105 serves as a coordination point for tRNA. The active-site Proton donor is His138.

It belongs to the pancreatic ribonuclease family. Homodimer. Interacts with RNH1; inhibiting ANG ribonuclease activity. Interacts with PCNA.

The protein resides in the secreted. Its subcellular location is the nucleus. It localises to the nucleolus. It is found in the cytoplasm. The protein localises to the stress granule. Has weak tRNA ribonuclease activity by itself due to partial autoinhibition by its C-terminus, which folds into a short alpha-helix that partially occludes the substrate-binding site. In absence of stress, the ribonuclease activity is inhibited by RNH1 in the cytoplasm. In response to stress, dissociates from RNH1 in the cytoplasm and associates with cytoplasmic ribosomes with vacant A-sites: ribosomes directly activate the tRNA ribonuclease activity of ANG by refolding the C-terminal alpha-helix. In response to stress, the angiogenic activity of ANG is inhibited by RNH1 in the nucleus. In terms of biological role, secreted ribonuclease that can either promote or restrict cell proliferation of target cells, depending on the context. Endocytosed in target cells via its receptor PLXNB2 and translocates to the cytoplasm or nucleus. Under stress conditions, localizes to the cytoplasm and promotes the assembly of stress granules (SGs): specifically cleaves a subset of tRNAs within anticodon loops to produce tRNA-derived stress-induced fragments (tiRNAs), resulting in translation repression and inhibition of cell proliferation. tiRNas also prevent formation of apoptosome, thereby promoting cell survival. Preferentially cleaves RNAs between a pyrimidine and an adenosine residue, suggesting that it cleaves the anticodon loop of tRNA(Ala) (32-UUAGCAU-38) after positions 33 and 36. Cleaves a subset of tRNAs, including tRNA(Ala), tRNA(Glu), tRNA(Gly), tRNA(Lys), tRNA(Val), tRNA(His), tRNA(Asp) and tRNA(Sec). Under growth conditions and in differentiated cells, translocates to the nucleus and stimulates ribosomal RNA (rRNA) transcription, including that containing the initiation site sequences of 45S rRNA, thereby promoting cell growth and proliferation. Angiogenin induces vascularization of normal and malignant tissues via its ability to promote rRNA transcription. Involved in hematopoietic stem and progenitor cell (HSPC) growth and survival by promoting rRNA transcription in growth conditions and inhibiting translation in response to stress, respectively. Mediates the crosstalk between myeloid and intestinal epithelial cells to protect the intestinal epithelial barrier integrity: secreted by myeloid cells and promotes intestinal epithelial cells proliferation and survival. Also mediates osteoclast-endothelial cell crosstalk in growing bone: produced by osteoclasts and protects the neighboring vascular cells against senescence by promoting rRNA transcription. The sequence is that of Angiogenin (ANG) from Aotus trivirgatus (Three-striped night monkey).